A 528-amino-acid polypeptide reads, in one-letter code: Chaperonin GroEL, chloroplastic (528 aa).

ATP is bound by residues 29-32, 86-90, Gly-414, 480-482, and Asp-496; these read TLGP, DGTTT, and DAA.

Belongs to the chaperonin (HSP60) family. Forms a cylinder of 14 subunits composed of two heptameric rings stacked back-to-back. Interacts with the co-chaperonin GroES.

It localises to the plastid. The protein localises to the chloroplast. It catalyses the reaction ATP + H2O + a folded polypeptide = ADP + phosphate + an unfolded polypeptide.. Functionally, together with its co-chaperonin GroES, plays an essential role in assisting protein folding. The GroEL-GroES system forms a nano-cage that allows encapsulation of the non-native substrate proteins and provides a physical environment optimized to promote and accelerate protein folding. The protein is Chaperonin GroEL, chloroplastic of Pyropia yezoensis (Susabi-nori).